The chain runs to 874 residues: MEVLREKVEEEEEAEREEAAKRAEWARTEKMMRPVEVRKEETTLTQEMLRDLEKKLSEIQIPISAELPAFTKDTIDISKLPVSYKTNTPKEEHLLQVADNFSRQYSHLCPDRVPLFLHPLNECEVPKFVSTTLRPTLMPYPELYNWDSCAQFVSDFLTMVPLPDPLKPPSHLYSSTTVLNYQKGNCFDFSTMLCSMLIGSGYDAYCVNGYGSLDLCHMDLTREVCPLTVKPKETVQKEEKVLPKKYTIRPPRDLCSRFEQEQEVKKQQEIRAQEKKQLREEEERLMEAEKAKPDALHGLRVHSWVLVLSGKREVPENFFIDAFTGHSYSTQDERFLGIESLWNHKNYWINMQDCWNCCKDLIFDLGDPVRWEYMLLGTDKSQLSLTEEDDSGINDEDDVENLGKEDEDKSFDMPHSWVEQIEISPEAFETRCPNGKKVIQYKRAKLEKWAPYLNSNGLVSRLTTYEDLECTNILEIKEWYQNREDMLELKHINKTTDLKIDYFKPGHPQALRVHSYKSMQPEMDRVIEFYETARVDGLIKREETARTMTEYYQGRPDFLSYRHANFRPRVKKLALSSAESNPRPIVKITEQFFRNPAKPAEEDVAERVFLLAEERIQLRYHCRDDHITASKREFLRRTEVDSKGNKIIMTPDMCISFEVEPMEHTKKLLYQYEAMMHLKREEKLSRHQVWESELEVLEILKLREEEEAAHTLTISIYDTKRNEKSKEYREAMERVMHEEHLRQVETQLDYLAPFLAQLPPGEKLTRWQAVRLKDECLSDFKQRLINKANLIQARFEKETQELQKKQQWYQENQVTLTPEDEDLYLSYCSQAMFRIRILEQRLNRHKELAPLKYLALEEKLYKDPRLGELQKIFA.

Positions 1–22 are disordered; the sequence is MEVLREKVEEEEEAEREEAAKR. Coiled coils occupy residues 1-60 and 257-297; these read MEVL…SEIQ and RFEQ…DALH. Over residues 386-400 the composition is skewed to acidic residues; the sequence is TEEDDSGINDEDDVE. Residues 386–410 are disordered; that stretch reads TEEDDSGINDEDDVENLGKEDEDKS. Residues 401–410 are compositionally biased toward basic and acidic residues; the sequence is NLGKEDEDKS. 2 coiled-coil regions span residues 688 to 711 and 781 to 807; these read QVWE…AAHT and KQRL…KKQQ.

Belongs to the DRC7 family. Component of the nexin-dynein regulatory complex (N-DRC). Interacts with TCTE1/DRC5. Interacts with DRC3 and GAS8/DRC4.

The protein localises to the cell projection. Its subcellular location is the cilium. It localises to the flagellum. It is found in the cytoplasm. The protein resides in the cytoskeleton. The protein localises to the cilium axoneme. Its subcellular location is the flagellum axoneme. Component of the nexin-dynein regulatory complex (N-DRC) a key regulator of ciliary/flagellar motility which maintains the alignment and integrity of the distal axoneme and regulates microtubule sliding in motile axonemes. Involved in the regulation of flagellar motility. Essential for male fertility, sperm head morphogenesis and sperm flagellum formation. This Macaca fascicularis (Crab-eating macaque) protein is Dynein regulatory complex subunit 7 (DRC7).